Here is a 231-residue protein sequence, read N- to C-terminus: Uracil-DNA glycosylase (231 aa).

Residue Asp74 is the Proton acceptor of the active site.

It belongs to the uracil-DNA glycosylase (UDG) superfamily. UNG family.

The protein resides in the cytoplasm. The catalysed reaction is Hydrolyzes single-stranded DNA or mismatched double-stranded DNA and polynucleotides, releasing free uracil.. Its function is as follows. Excises uracil residues from the DNA which can arise as a result of misincorporation of dUMP residues by DNA polymerase or due to deamination of cytosine. The sequence is that of Uracil-DNA glycosylase from Campylobacter jejuni (strain RM1221).